A 228-amino-acid polypeptide reads, in one-letter code: Cytochrome c biogenesis ATP-binding export protein CcmA (228 aa).

In terms of domain architecture, ABC transporter spans 2–227 (LSIERLGVGR…LHLERSGAWL (226 aa)). 34 to 41 (GANGSGKT) contacts ATP. The segment at 106-126 (GAPDGTSSVPASGRSGVAAPP) is disordered.

Belongs to the ABC transporter superfamily. CcmA exporter (TC 3.A.1.107) family. As to quaternary structure, the complex is composed of two ATP-binding proteins (CcmA) and two transmembrane proteins (CcmB).

The protein localises to the cell inner membrane. The enzyme catalyses heme b(in) + ATP + H2O = heme b(out) + ADP + phosphate + H(+). In terms of biological role, part of the ABC transporter complex CcmAB involved in the biogenesis of c-type cytochromes; once thought to export heme, this seems not to be the case, but its exact role is uncertain. Responsible for energy coupling to the transport system. The sequence is that of Cytochrome c biogenesis ATP-binding export protein CcmA from Paraburkholderia xenovorans (strain LB400).